Reading from the N-terminus, the 379-residue chain is Beta-1,3-N-acetylglucosaminyltransferase lunatic fringe (379 aa).

The Cytoplasmic segment spans residues 1 to 8; sequence MLKRCGRR. Residues 9–29 form a helical; Signal-anchor for type II membrane protein membrane-spanning segment; that stretch reads LLLALAGALLACLLVLTADPP. Over 30 to 379 the chain is Lumenal; that stretch reads PPPLPAERGR…TPWCPRTAIF (350 aa). A disordered region spans residues 86-107; that stretch reads RDAGPPPGAAPRPADGHPRPLA. Position 129 (Arg129) interacts with substrate. Asn167 carries an N-linked (GlcNAc...) asparagine glycan. Cystine bridges form between Cys168–Cys179 and Cys197–Cys260. Residue Asp201 coordinates substrate. Mn(2+) is bound at residue Asp202. Asp290 is an active-site residue. His314 contributes to the Mn(2+) binding site. Cys364 and Cys373 are disulfide-bonded.

The protein belongs to the glycosyltransferase 31 family. Mn(2+) serves as cofactor. Requires Co(2+) as cofactor. In terms of processing, a soluble form may be derived from the membrane form by proteolytic processing.

Its subcellular location is the golgi apparatus. It localises to the golgi apparatus membrane. It catalyses the reaction 3-O-(alpha-L-fucosyl)-L-threonyl-[EGF-like domain protein] + UDP-N-acetyl-alpha-D-glucosamine = 3-O-(N-acetyl-beta-D-glucosaminyl-(1-&gt;3)-alpha-L-fucosyl)-L-threonyl-[EGF-like domain protein] + UDP + H(+). It carries out the reaction 3-O-(alpha-L-fucosyl)-L-seryl-[EGF-like domain protein] + UDP-N-acetyl-alpha-D-glucosamine = 3-O-(N-acetyl-beta-D-glucosaminyl-(1-&gt;3)-alpha-L-fucosyl)-L-seryl-[EGF-like domain protein] + UDP + H(+). Its function is as follows. Glycosyltransferase that initiates the elongation of O-linked fucose residues attached to EGF-like repeats in the extracellular domain of Notch molecules. Modulates NOTCH1 activity by modifying O-fucose residues at specific EGF-like domains resulting in inhibition of NOTCH1 activation by JAG1 and enhancement of NOTCH1 activation by DLL1 via an increase in its binding to DLL1. Decreases the binding of JAG1 to NOTCH2 but not that of DLL1. Essential mediator of somite segmentation and patterning. The chain is Beta-1,3-N-acetylglucosaminyltransferase lunatic fringe from Homo sapiens (Human).